Reading from the N-terminus, the 448-residue chain is Adenylosuccinate synthetase (448 aa).

Residues 36 to 42 (GDEGKGK) and 64 to 66 (GHT) each bind GTP. Asp-37 acts as the Proton acceptor in catalysis. Positions 37 and 64 each coordinate Mg(2+). IMP is bound by residues 37–40 (DEGK), 62–65 (NAGH), Thr-154, Arg-168, Asn-246, Thr-261, and Arg-325. His-65 serves as the catalytic Proton donor. Residue 321–327 (VTTKRKR) coordinates substrate. GTP contacts are provided by residues Arg-327, 353–355 (KLD), and 436–438 (GVG).

The protein belongs to the adenylosuccinate synthetase family. As to quaternary structure, homodimer. It depends on Mg(2+) as a cofactor.

The protein localises to the cytoplasm. The catalysed reaction is IMP + L-aspartate + GTP = N(6)-(1,2-dicarboxyethyl)-AMP + GDP + phosphate + 2 H(+). It participates in purine metabolism; AMP biosynthesis via de novo pathway; AMP from IMP: step 1/2. In terms of biological role, plays an important role in the de novo pathway and in the salvage pathway of purine nucleotide biosynthesis. Catalyzes the first committed step in the biosynthesis of AMP from IMP. This Drosophila virilis (Fruit fly) protein is Adenylosuccinate synthetase.